A 369-amino-acid polypeptide reads, in one-letter code: Biglycan (369 aa).

Residues 1–16 (MCPLWLLTLLLALSQA) form the signal peptide. Positions 17–37 (LPFEQKGFWDFTLDDGLLMMN) are excised as a propeptide. 2 O-linked (Xyl...) (glycosaminoglycan) serine glycosylation sites follow: Ser42 and Ser48. 2 disulfides stabilise this stretch: Cys64–Cys70 and Cys68–Cys77. LRR repeat units follow at residues 83–103 (KTVPKEISPDTTLLDLQNNDI), 104–127 (SELRKDDFKGLQHLYALVLVNNKI), 128–151 (SKIHEKAFSPLRKLQKLYISKNHL), 152–172 (VEIPPNLPSSLVELRIHDNRI), 173–196 (RKVPKGVFSGLRNMNCIEMGGNPL), 197–221 (ENSGFEPGAFDGLKLNYLRISEAKL), 222–242 (TGIPKDLPETLNELHLDHNKI), 243–266 (QAIELEDLLRYSKLYRLGLGHNQI), 267–290 (RMIENGSLSFLPTLRELHLDNNKL), 291–313 (SRVPAGLPDLKLLQVVYLHSNNI), 314–343 (TKVGINDFCPMGFGVKRAYYNGISLFNNPV), and 344–369 (PYWEVQPATFRCVTDRLAIQFGNYKK). Residues Asn271 and Asn312 are each glycosylated (N-linked (GlcNAc...) asparagine). Cysteines 322 and 355 form a disulfide.

It belongs to the small leucine-rich proteoglycan (SLRP) family. SLRP class I subfamily. The two attached glycosaminoglycan chains can be either chondroitin sulfate or dermatan sulfate. As to expression, found in several connective tissues, especially in articular cartilages.

It localises to the secreted. The protein localises to the extracellular space. The protein resides in the extracellular matrix. In terms of biological role, may be involved in collagen fiber assembly. This Mus musculus (Mouse) protein is Biglycan (Bgn).